We begin with the raw amino-acid sequence, 136 residues long: MLEFFRPPRARSPRELVQLLPEAWTTSRSSTGSANPSASRKPARYPRIHAPELQSGEARWPLWSRIRPLEDPLKQRLTNLEKKITNVTTKFEQIEKCCKRNDEVLFRLENHAETLRAAMISLAKKIDVQTGRRPYE.

Positions E22–A50 are disordered. The span at W24 to A38 shows a compositional bias: polar residues. An N-linked (GlcNAc...) asparagine; by host glycan is attached at N86.

This sequence belongs to the poxviruses fusion protein family. As to quaternary structure, homotrimer, covalently linked.

The protein resides in the virion membrane. Functionally, this protein appears to play an important role in virus penetration at the level of cell fusion. The N-terminal proximal region is essential for fusion ability. Essential in fusing the outermost of the two Golgi-derived membranes enveloping the virus with the plasma membrane, and in its subsequent release extracellularly. In Vaccinia virus (strain WR 65-16) (VACV), this protein is 14 kDa fusion protein.